The primary structure comprises 365 residues: Flagellar P-ring protein (365 aa).

Residues 1 to 21 (MKSLRLVALFCCLLPLGMAHA) form the signal peptide.

The protein belongs to the FlgI family. The basal body constitutes a major portion of the flagellar organelle and consists of four rings (L,P,S, and M) mounted on a central rod.

Its subcellular location is the periplasm. The protein localises to the bacterial flagellum basal body. In terms of biological role, assembles around the rod to form the L-ring and probably protects the motor/basal body from shearing forces during rotation. This Aeromonas hydrophila subsp. hydrophila (strain ATCC 7966 / DSM 30187 / BCRC 13018 / CCUG 14551 / JCM 1027 / KCTC 2358 / NCIMB 9240 / NCTC 8049) protein is Flagellar P-ring protein.